Here is a 444-residue protein sequence, read N- to C-terminus: MSDNDDDFMCDDDEDYGLEYSEDSNSEPDVDLENQYYNSKALKEEEPKAALASFQKVLDLENGEKGEWGFKALKQMIKINFRLCNYDEMMVRYKQLLTYIKSAVTRNHSEKSINSILDYISTSKNMALLQNFYETTLDALRDAKNDRLWFKTNTKLGKLYFDRSDFTKLQKILKQLHQSCQTDDGEDDLKKGTQLLEIYALEIQMYTVQKNNKKLKALYEQSLHIKSAIPHPLIMGVIRECGGKMHLREGEFEKAHTDFFEAFKNYDESGSPRRTTCLKYLVLANMLMKSGINPFDSQEAKPYKNDPEILAMTNLVNSYQNNDINEFETILRQHRSNIMADQFIREHIEDLLRNIRTQVLIKLIRPYKNIAIPFIANALNIEPAEVESLLVSCILDDTIKGRIDQVNQVLQLDKINSSASRYNALEKWSNQIQSLQFAVVQKMA.

The tract at residues Met-1 to Asp-31 is disordered. Residues Ala-255–Ser-417 form the PCI domain.

This sequence belongs to the CSN2 family. Component of the CSN complex, probably composed of CSN1b, alien/CSN2, CSN3, CSN4, CSN5, CSN6, CSN7 and CSN8. Interacts with Rpn6. In terms of tissue distribution, expressed during embryonic stages 11-14 in the muscle attachment sites (apodemes); pharynx attachment to the roof of the mouth and in the epidermis of the head for the dorsal and ventral prothoracic pharyngeal muscle attachment. From stage 16 onwards expression is seen in all thoracic and abdominal apodemes.

The protein resides in the cytoplasm. The protein localises to the nucleus. In terms of biological role, component of the COP9 signalosome complex (CSN), a complex involved in various cellular and developmental processes. The CSN complex is an essential regulator of the ubiquitin (Ubl) conjugation pathway by mediating the deneddylation of the cullin subunits of the SCF-type E3 ligase complexes, leading to decrease the Ubl ligase activity of SCF. The CSN complex plays an essential role in oogenesis and embryogenesis and is required for proper photoreceptor R cell differentiation and promote lamina glial cell migration or axon targeting. It also promotes Ubl-dependent degradation of cyclin E (CycE) during early oogenesis. This Drosophila melanogaster (Fruit fly) protein is COP9 signalosome complex subunit 2.